A 246-amino-acid chain; its full sequence is Pyridoxine 5'-phosphate synthase (246 aa).

Residue Asn12 coordinates 3-amino-2-oxopropyl phosphate. Residue 14–15 participates in 1-deoxy-D-xylulose 5-phosphate binding; sequence DH. Position 23 (Arg23) interacts with 3-amino-2-oxopropyl phosphate. His48 acts as the Proton acceptor in catalysis. 2 residues coordinate 1-deoxy-D-xylulose 5-phosphate: Arg50 and His55. Glu75 functions as the Proton acceptor in the catalytic mechanism. Position 105 (Thr105) interacts with 1-deoxy-D-xylulose 5-phosphate. The Proton donor role is filled by His196. Residues Gly197 and 218-219 each bind 3-amino-2-oxopropyl phosphate; that span reads GH.

It belongs to the PNP synthase family. In terms of assembly, homooctamer; tetramer of dimers.

The protein localises to the cytoplasm. The catalysed reaction is 3-amino-2-oxopropyl phosphate + 1-deoxy-D-xylulose 5-phosphate = pyridoxine 5'-phosphate + phosphate + 2 H2O + H(+). The protein operates within cofactor biosynthesis; pyridoxine 5'-phosphate biosynthesis; pyridoxine 5'-phosphate from D-erythrose 4-phosphate: step 5/5. Its function is as follows. Catalyzes the complicated ring closure reaction between the two acyclic compounds 1-deoxy-D-xylulose-5-phosphate (DXP) and 3-amino-2-oxopropyl phosphate (1-amino-acetone-3-phosphate or AAP) to form pyridoxine 5'-phosphate (PNP) and inorganic phosphate. The sequence is that of Pyridoxine 5'-phosphate synthase from Pseudomonas putida (strain W619).